We begin with the raw amino-acid sequence, 439 residues long: tRNA-2-methylthio-N(6)-dimethylallyladenosine synthase (439 aa).

One can recognise an MTTase N-terminal domain in the interval 2–116 (LKVYIETMGC…ISQVIHKEKA (115 aa)). Residues Cys-11, Cys-47, Cys-79, Cys-149, Cys-153, and Cys-156 each contribute to the [4Fe-4S] cluster site. The region spanning 135-368 (KKAEVRSLLN…QNRHKEILEE (234 aa)) is the Radical SAM core domain. Residues 371–437 (RLEVGKTHVV…KGRLMATTKN (67 aa)) enclose the TRAM domain.

Belongs to the methylthiotransferase family. MiaB subfamily. In terms of assembly, monomer. Requires [4Fe-4S] cluster as cofactor.

It is found in the cytoplasm. It carries out the reaction N(6)-dimethylallyladenosine(37) in tRNA + (sulfur carrier)-SH + AH2 + 2 S-adenosyl-L-methionine = 2-methylsulfanyl-N(6)-dimethylallyladenosine(37) in tRNA + (sulfur carrier)-H + 5'-deoxyadenosine + L-methionine + A + S-adenosyl-L-homocysteine + 2 H(+). In terms of biological role, catalyzes the methylthiolation of N6-(dimethylallyl)adenosine (i(6)A), leading to the formation of 2-methylthio-N6-(dimethylallyl)adenosine (ms(2)i(6)A) at position 37 in tRNAs that read codons beginning with uridine. This chain is tRNA-2-methylthio-N(6)-dimethylallyladenosine synthase, found in Helicobacter acinonychis (strain Sheeba).